The chain runs to 484 residues: Glutamyl-tRNA(Gln) amidotransferase subunit A (484 aa).

Active-site charge relay system residues include lysine 74 and serine 149. The active-site Acyl-ester intermediate is serine 173.

Belongs to the amidase family. GatA subfamily. As to quaternary structure, heterotrimer of A, B and C subunits.

The catalysed reaction is L-glutamyl-tRNA(Gln) + L-glutamine + ATP + H2O = L-glutaminyl-tRNA(Gln) + L-glutamate + ADP + phosphate + H(+). Its function is as follows. Allows the formation of correctly charged Gln-tRNA(Gln) through the transamidation of misacylated Glu-tRNA(Gln) in organisms which lack glutaminyl-tRNA synthetase. The reaction takes place in the presence of glutamine and ATP through an activated gamma-phospho-Glu-tRNA(Gln). The polypeptide is Glutamyl-tRNA(Gln) amidotransferase subunit A (Prochlorococcus marinus subsp. pastoris (strain CCMP1986 / NIES-2087 / MED4)).